Consider the following 357-residue polypeptide: Bcl-2/adenovirus E1B 19 kDa-interacting protein 2-like protein (357 aa).

Basic and acidic residues predominate over residues 32–49; the sequence is ELELKEEWQDEEFPRLLP. The interval 32–156 is disordered; the sequence is ELELKEEWQD…LPRAEGLGTS (125 aa). Positions 105-117 are enriched in polar residues; sequence ASPTQSAPSSPDG. The span at 119-134 shows a compositional bias: acidic residues; the sequence is SDLEIDELETPSDSEQ. Over residues 136 to 149 the composition is skewed to basic and acidic residues; it reads DSGHEFEWEDELPR. The region spanning 191–352 is the CRAL-TRIO domain; that stretch reads DMTVIEPYKK…AVRQLDRDLH (162 aa).

Homodimer. Interacts with BCL2, ARHGAP1, MIF and GFER. Isoform 2 is expressed in placenta and lung.

Its function is as follows. May be a bridge molecule between BCL2 and ARHGAP1/CDC42 in promoting cell death. This is Bcl-2/adenovirus E1B 19 kDa-interacting protein 2-like protein (BNIPL) from Homo sapiens (Human).